Here is a 1197-residue protein sequence, read N- to C-terminus: Sensor protein EvgS (1197 aa).

The N-terminal stretch at 1-21 (MKFLPYIFLLCCGLWSTISFA) is a signal peptide. The Cytoplasmic segment spans residues 22–325 (DEDYIEYRGI…SMTDENGSVR (304 aa)). The helical transmembrane segment at 326–346 (GVMGDILNIITLQTGLNFSPI) threads the bilayer. Topologically, residues 347–537 (TVSHNIHAGT…TWDLYSEQFY (191 aa)) are periplasmic. Residues 538 to 558 (IVTTLSVLLVGSSLLWGFYLL) traverse the membrane as a helical segment. At 559 to 1197 (RSVRRRKVIQ…EIAVFCQKND (639 aa)) the chain is on the cytoplasmic side. Residues 718–938 (TMSHEIRTPI…TFTITIPVEI (221 aa)) form the Histidine kinase domain. H721 bears the Phosphohistidine; by autocatalysis mark. Residues 960 to 1074 (SILIADDHPT…VLKTHLSQLH (115 aa)) enclose the Response regulatory domain. Position 1009 is a 4-aspartylphosphate (D1009). One can recognise an HPt domain in the interval 1098 to 1197 (DLQLMQEILM…EIAVFCQKND (100 aa)). H1137 carries the phosphohistidine modification.

In terms of processing, activation requires a sequential transfer of a phosphate group from a His in the primary transmitter domain, to an Asp in the receiver domain and to a His in the secondary transmitter domain.

It is found in the cell inner membrane. The enzyme catalyses ATP + protein L-histidine = ADP + protein N-phospho-L-histidine.. Member of the two-component regulatory system EvgS/EvgA. Phosphorylates EvgA via a four-step phosphorelay in response to environmental signals. This is Sensor protein EvgS (evgS) from Escherichia coli (strain K12).